A 443-amino-acid polypeptide reads, in one-letter code: Xaa-Pro dipeptidase (443 aa).

Mn(2+)-binding residues include Asp246, Asp257, His339, Glu384, and Glu423.

The protein belongs to the peptidase M24B family. Bacterial-type prolidase subfamily. Requires Mn(2+) as cofactor.

The enzyme catalyses Xaa-L-Pro dipeptide + H2O = an L-alpha-amino acid + L-proline. Its function is as follows. Splits dipeptides with a prolyl residue in the C-terminal position. In Citrobacter koseri (strain ATCC BAA-895 / CDC 4225-83 / SGSC4696), this protein is Xaa-Pro dipeptidase.